Here is a 181-residue protein sequence, read N- to C-terminus: Oligoribonuclease (181 aa).

The 164-residue stretch at 8–171 (LIWIDLEMTG…DDIRESVAEL (164 aa)) folds into the Exonuclease domain. Residue Tyr129 is part of the active site.

The protein belongs to the oligoribonuclease family.

Its subcellular location is the cytoplasm. Functionally, 3'-to-5' exoribonuclease specific for small oligoribonucleotides. The polypeptide is Oligoribonuclease (Yersinia pseudotuberculosis serotype O:1b (strain IP 31758)).